A 146-amino-acid chain; its full sequence is Transcriptional regulator MraZ (146 aa).

SpoVT-AbrB domains follow at residues 5 to 51 (NHPT…PLQE) and 80 to 123 (GQMV…NHEA).

The protein belongs to the MraZ family. Forms oligomers.

The protein localises to the cytoplasm. The protein resides in the nucleoid. The polypeptide is Transcriptional regulator MraZ (Acidobacterium capsulatum (strain ATCC 51196 / DSM 11244 / BCRC 80197 / JCM 7670 / NBRC 15755 / NCIMB 13165 / 161)).